The primary structure comprises 670 residues: ATP synthase subunit alpha 2 (670 aa).

180–187 (GDRATGKT) serves as a coordination point for ATP. A disordered region spans residues 525-670 (MPAEDAAGDI…DAEAEARHKR (146 aa)). Residues 543-588 (ARGDADRDADHGANREVSREVSPEASREVSREVSREVSHEADRDAA) show a composition bias toward basic and acidic residues. Residues 589–599 (ADAARVAGRAP) are compositionally biased toward low complexity. The segment covering 621 to 639 (ADGDRASASRPPPDARGDA) has biased composition (basic and acidic residues). Residues 650–661 (ADANVNADANVD) show a composition bias toward low complexity.

Belongs to the ATPase alpha/beta chains family. In terms of assembly, F-type ATPases have 2 components, CF(1) - the catalytic core - and CF(0) - the membrane proton channel. CF(1) has five subunits: alpha(3), beta(3), gamma(1), delta(1), epsilon(1). CF(0) has three main subunits: a(1), b(2) and c(9-12). The alpha and beta chains form an alternating ring which encloses part of the gamma chain. CF(1) is attached to CF(0) by a central stalk formed by the gamma and epsilon chains, while a peripheral stalk is formed by the delta and b chains.

It localises to the cell inner membrane. The enzyme catalyses ATP + H2O + 4 H(+)(in) = ADP + phosphate + 5 H(+)(out). Produces ATP from ADP in the presence of a proton gradient across the membrane. The alpha chain is a regulatory subunit. The protein is ATP synthase subunit alpha 2 of Burkholderia mallei (strain NCTC 10247).